The primary structure comprises 174 residues: Peptide deformylase (174 aa).

Fe cation contacts are provided by Cys96 and His138. The active site involves Glu139. Residue His142 coordinates Fe cation.

This sequence belongs to the polypeptide deformylase family. The cofactor is Fe(2+).

The catalysed reaction is N-terminal N-formyl-L-methionyl-[peptide] + H2O = N-terminal L-methionyl-[peptide] + formate. Removes the formyl group from the N-terminal Met of newly synthesized proteins. Requires at least a dipeptide for an efficient rate of reaction. N-terminal L-methionine is a prerequisite for activity but the enzyme has broad specificity at other positions. This chain is Peptide deformylase, found in Helicobacter pylori (strain P12).